A 323-amino-acid chain; its full sequence is Beta-ketoacyl-[acyl-carrier-protein] synthase III (323 aa).

Active-site residues include C114 and H250. The tract at residues 251–255 is ACP-binding; it reads QANLR. Residue N280 is part of the active site.

It belongs to the thiolase-like superfamily. FabH family. As to quaternary structure, homodimer.

The protein resides in the cytoplasm. The catalysed reaction is malonyl-[ACP] + acetyl-CoA + H(+) = 3-oxobutanoyl-[ACP] + CO2 + CoA. It functions in the pathway lipid metabolism; fatty acid biosynthesis. Functionally, catalyzes the condensation reaction of fatty acid synthesis by the addition to an acyl acceptor of two carbons from malonyl-ACP. Catalyzes the first condensation reaction which initiates fatty acid synthesis and may therefore play a role in governing the total rate of fatty acid production. Possesses both acetoacetyl-ACP synthase and acetyl transacylase activities. Its substrate specificity determines the biosynthesis of branched-chain and/or straight-chain of fatty acids. This Cereibacter sphaeroides (strain ATCC 17025 / ATH 2.4.3) (Rhodobacter sphaeroides) protein is Beta-ketoacyl-[acyl-carrier-protein] synthase III.